Here is a 439-residue protein sequence, read N- to C-terminus: GTPase Obg (439 aa).

The Obg domain maps to 4–162 (IEFIDVVDIY…KHIQLELKLL (159 aa)). Residues 163–336 (ADVGLIGYPN…LKYAMWDIIK (174 aa)) form the OBG-type G domain. GTP contacts are provided by residues 169-176 (GYPNVGKS), 194-198 (FTTLV), 218-221 (DIPG), 288-291 (NKSD), and 317-319 (SAV). Residues S176 and T196 each contribute to the Mg(2+) site. Residues 361–439 (LVLPDRVDIK…VEGVDFIFKE (79 aa)) enclose the OCT domain.

This sequence belongs to the TRAFAC class OBG-HflX-like GTPase superfamily. OBG GTPase family. As to quaternary structure, monomer. Mg(2+) is required as a cofactor.

It is found in the cytoplasm. An essential GTPase which binds GTP, GDP and possibly (p)ppGpp with moderate affinity, with high nucleotide exchange rates and a fairly low GTP hydrolysis rate. Plays a role in control of the cell cycle, stress response, ribosome biogenesis and in those bacteria that undergo differentiation, in morphogenesis control. This Fervidobacterium nodosum (strain ATCC 35602 / DSM 5306 / Rt17-B1) protein is GTPase Obg.